Here is a 397-residue protein sequence, read N- to C-terminus: Xyloglucan O-acetyltransferase 3 (397 aa).

At 1–3 the chain is on the cytoplasmic side; sequence MNR. Residues 4 to 24 traverse the membrane as a helical; Signal-anchor for type II membrane protein segment; it reads FFYTVGLIFLFSFFILYSPKT. At 25 to 397 the chain is on the lumenal side; the sequence is SDLSNNVDLH…RHAFTDFTWS (373 aa). 4 disulfide bridges follow: Cys48–Cys98, Cys69–Cys134, Cys78–Cys370, and Cys293–Cys366. N-linked (GlcNAc...) asparagine glycosylation is present at Asn66. Positions 121-123 match the GDS motif motif; sequence GDS. Ser123 (nucleophile) is an active-site residue. N-linked (GlcNAc...) asparagine glycans are attached at residues Asn162, Asn182, and Asn294. The active-site Proton donor is Asp365. The short motif at 365–368 is the DXXH motif element; sequence DCVH. His368 acts as the Proton acceptor in catalysis.

Belongs to the PC-esterase family. TBL subfamily.

The protein localises to the golgi apparatus membrane. Xyloglucan acetyltransferase that catalyzes the acetylation of fucosylated Gal residues on xyloglucan side chains. Predominantly catalyze 6-O-monoacetylation of Gal residues in the Fuc-Gal-Xyl trisaccharide side chains of xyloglucan oligomers. The polypeptide is Xyloglucan O-acetyltransferase 3 (Populus trichocarpa (Western balsam poplar)).